We begin with the raw amino-acid sequence, 3828 residues long: MGRSKFPGNPSKSINRKRISVLQLEDEAASAAAAAAAATAATTEQHQQSEQSAGSSASREKGNNCDNDDDDNAPSGAATSGNRGASSGASDAAPEGGNSYGNGSSTGSKTTNGGNVNGGSHHKSATAPAELKECKNQGNQIEPNNCIAAEPDGTEDTNNDDDDDSSNDKKPTAAAAAAAAAAFVPGPSALQRARKGGNKKFKNLNLARPEVMLPSTSKLKQQQQQQLQLNCPSASASSLSSSAAAAAAAAAPTTTTTTASASATLTATATSTSTSSLPGTPLSVIAGGGGGAAAAALLLANPFASVETKVVEVNAAATAAATAAATAAAGAGEDVGMLKASIEMANEAGLEAPAVAVKSSGSSPNPNHNPNAVAGSTSAAAPGAPTATKQKKTVTFKNILETSDDKSVVKRFYNPDNRVPLVSIMKKDSLNRPLNYCRGSEFIVRPSILSKILNKNSNIDKLNSLKFRSVHASSNSIQESSSSTTNLFGSGLSRAFGAPIDDEDAVSGGVTFRKQEPQHKTPEDNDDDGSASSDAIEDDEDIDDDDAEENEEAASEKSAETTASVDEKEADDRQLVMDKHFVLPKRSTRSSRIIKPNKRLLEVGGICSKRSPSDANGKPKPKNYFGLATLPAKCTPRRRRSAATALSQKLGKETFASFATAKVNSSFVLRQPRLQFQTDKSRSFVSAKPTLPTTTVLPASSSAITSANVLSFGALNNANSAVAAASTCAVCSAPVNNKDAPLARKYGVIACEVCRKFNSRMTKISKLSTPMHSNPSTSTAQSGQQLKCTDGGNCSILSLKSQLKNFKKLYKERCKACWLKKCLATLQLPAGHRSRLSAILPASMREEVAPKDDKCPELLSPTASLRFTAPTSSASSGTTIKWKSSAETAVNSIKSNPLAENNVTFGGTPLLRPAILEKPLFLKIGSDNKKAKESKEALGLSPVPSTSEAAVAPGKTTRKAKQDKEKARELEAEKPLSPNAKKTTEANTPETQKDEQPASTTTTVSAASSSTSHTSSAATNSSQLETTEAANASAVPDNLKRQRIDLKGPRVKHVCRSASIVLGQPLATFGDEEEELAAAEAGPAPTTTTTTTSPEVIIKKPKSPQPMQMIIDENDNCASCILTPTEATAEAQPAVKSVLESRSSKSNTQTEAKKTPATSGSSKGKVTTRNATATVTSVASSLVATKKQRNIEVSSSISSSQAAATQSRRALAKEVNRLKALISIDFWENYDPAEVCQTGFGLIVTETVAQRALCFLCGSTGLDPLIFCACCCEPYHQYCVLDEYNLKHSSFEDTLMTSLLETSNNACAISAATNTALNQLTQRLNWLCPRCTVCYTCNMSSGSKVKCQKCQKNYHSTCLGTSKRLLGADRPLICVNCLKCKSCATTKVSKFVGNLPMCTACFKLRKKGNFCPICQKCYDDNDFDLKMMECGDCNQWVHSKCEGLSDEQYNLLSTLPESIEFICKKCARRCDVSRNKADEWRQAVMEEFKSSLYSVLKLLSKSRQACALLKLSPRKNWRCCSAGAQPAKAHSQGKLQPKALQFTYNGLGSDGESQNSDDIYEFKEQHSTNRKPSTPVPCSCLQPLSQSPSFSLVDIKQKIASNAYVSLAEFNYDMSQVIQQSNCDELDIAYKELLSEQFPWFQNETKACTDALEEDMFESCGYEELKESPTTYAEHHTASQAPRTGLLDIPLDDVDDLGGCAVKTRLDTRVCLFCRKSGEGLSGEEARLLYCGHDCWVHINCAMWSAEVFEEIDGSLQNVHSAVARGRMIKCTVCGNRGATVGCNVKSCGEHYHYPCARTIDCAFLTDKSMYCPAHARNALKANGSPSVTYESNFEVSRPVYVELERKRKKLIVPAKVQFHIGSVAVRQLGSIVPRFSDSFEAIVPINFLCSRLYWSSKEPWKIVEYTVRTTIQNSYSSTLTLDAGRNFTVDHTNPNCSLVQLGLAQIARWHSSLARSDLLDTDWAEFPNSYVPADENTEEEPQQNADLLPPEIKDAIFEDLPHELLDGISMLDIFMYEDLGDKTELFAMSEQSKDGTTATSQAGGASVIICDEDTRNSNSLNKHLVLSNCCTASNPVDDAMLCAARSSSQEKECGDVLKKTDTAPTRSWPKLDGGSVAAFKRRKLSKNIAEGVLLSLNQRSKKEMATVAGITRRQSVCGSSELPAEGSATMRTKSFTWSAAKCLFEKNESREEPAKLTIMQMDGVDDSITEYRIIGSDGNLSTAQFTGQVKCERCQCTYRNYDSFQRHLGSCEPMSTSESESETATGTAQLSAESLNELQKQALAAATLSNTGGLNYLQTSFPQVQNLATLGQFGVQGLQGLQTLQLQPQSLGNGFFLSQPNAAQATSNGNDVLQLYANSLQNLAANLGGGFTLTQPTMSTQAQPQLIALSTNPDGTQQFIQLPQSNGATTQLLQTAAPLRCNATYQTLQATNSDKKIVLLFLEAGDPLQEVVTQAAQQATAAAHQKQLKSGHGVKPIQAKLQGQQQQQRHQQHQQHQQHQQQQQQQQQQQQQQQTPITVAQHGGTTQLLGQNLLQPQLLFQSNAQPQTQQLLLPQTQAQNIISFVTGDGSQNQPLQYISIPTTNDFKPQQTTSTPTFLTAPGGGATFLQTDASGNLMLTTAPANSGLQMLTGQLQTQPQVIGTLIQPQTLQLTTGADGTQTATAQQPLILGGATGGGTTGLEFATAPQVILATQPMYYGLETIVQNTVMSSQQFVSTAMPGVLSQNSSFSATTTQVFQASKIEPIVDLPAGYVVLNNAVDASGNTSWLQQSQTQATDDATAQLLQNAGFQFQTTPTTSTQQTMSTDYAPPLVVTAKVPPVAQMKRNTNANKSPISVLSKVQPQPQQSQVVNKVLPTNVIQQQQQQQQQQQQQQQQMQPKQQLAGNANLKLTSQFQRQQQANELKNKQAAGQQTGSTCGAPPSIASKPLQKKTNLIRPIHKVEVKPKIMKQAPKLATSAASMQHHQQQQSPAAINQVAKVALLQQRLAPAPQPQQQEPQEEQQHLHQQQQQQQQQQQHMQQHQQQQQQLSMPQLLRAQQPIISIVNTAEPQAATQFVIRPALQAQAQPIQLQEQQSQQQQQQPAEQLINGKAARLQRYASNSLPTNVVNPLQQQRCASANNSSNSNVTQQNSTITINSRPTNRVLPMQQRQEPTPLSNDVVVQSPTPPKPIEEPVPAGASTQKPIVKCYAQLEQKSPGYETELKTNITLDNLEQTNSITTMQLQQPQQGPIYGEQIFEKQSEAQVQLEKPKHNDLMLLEATSCQQQQQQQQHMEMVVDNGFQLTSNESCLLEKHGFNVEAVPMDTEDHYASMKNGSGGGAAEGIGQVDDAEEDEDDDDDFSLKMATSACNDHEMSDSEEPAVKEKISKILDNLTNDDCSDSIATATTVEASAGYQQMVEDVLATTAAGSVSTDDETFTATAEAVEAAASYINEMAEAHELQLKQLQAGVELDLKKPKLDVPQQQPDTVPPNVVPTAAAPQQPPPMRDPKKISGPHLLYEIQSEDGFTYKSSSIAEIWEKVFEAVQVARRAHGLTPLPEGPLADMSGVQMIGLKTNALKYLIEQLPGVEKCVKYTPKYHKRNGNVSTAAGGGHARTAGSNPAALAAGAESLIDYGSDQEELQENAYECARCEPYVSRSEYDMFSWLASRHRKQPIQVFVQPSDNELVPRRGTGSNLPMAMKYRTLKETYKDYVGVFRSHIHGRGLYCTKDIEAGEMVIEYAGELIRSTLTDKRERYYDSRGIGCYMFKIDDNLVVDATMRGNAARFINHSCEPNCYSKVVDILGHKHIIIFALRRIVQGEELTYDYKFPFEDEKIPCSCGSKRCRKYLN.

Disordered regions lie at residues 25-179 (EDEA…AAAA), 356-390 (AVKS…ATKQ), and 512-589 (FRKQ…RSTR). The span at 29–57 (ASAAAAAAAATAATTEQHQQSEQSAGSSA) shows a compositional bias: low complexity. Over residues 77 to 89 (AATSGNRGASSGA) the composition is skewed to polar residues. The span at 101-114 (GNGSSTGSKTTNGG) shows a compositional bias: low complexity. Residues 152-165 (DGTEDTNNDDDDDS) are compositionally biased toward acidic residues. Over residues 359–387 (SSGSSPNPNHNPNAVAGSTSAAAPGAPTA) the composition is skewed to low complexity. A compositionally biased stretch (basic and acidic residues) spans 513–523 (RKQEPQHKTPE). Positions 524-553 (DNDDDGSASSDAIEDDEDIDDDDAEENEEA) are enriched in acidic residues. A compositionally biased stretch (basic and acidic residues) spans 554 to 581 (ASEKSAETTASVDEKEADDRQLVMDKHF). Residues 725–839 (ASTCAVCSAP…AGHRSRLSAI (115 aa)) constitute a DNA-binding region (nuclear receptor). Disordered regions lie at residues 933-1036 (ESKE…SAVP), 1075-1094 (ELAA…TTSP), and 1131-1170 (AQPA…TTRN). The span at 960-974 (AKQDKEKARELEAEK) shows a compositional bias: basic and acidic residues. Composition is skewed to low complexity over residues 998-1022 (ASTT…TNSS) and 1078-1094 (AAEA…TTSP). A compositionally biased stretch (polar residues) spans 1140–1170 (ESRSSKSNTQTEAKKTPATSGSSKGKVTTRN). PHD-type zinc fingers lie at residues 1251-1334 (RALC…CTVC), 1335-1380 (YTCN…CLKC), and 1408-1469 (GNFC…CARR). The Bromo domain maps to 1483–1644 (AVMEEFKSSL…SEQFPWFQNE (162 aa)). The segment at 1708-1748 (TRVCLFCRKSGEGLSGEEARLLYCGHDCWVHINCAMWSAEV) adopts a C2HC pre-PHD-type zinc-finger fold. The PHD-type 4 zinc finger occupies 1769 to 1816 (IKCTVCGNRGATVGCNVKSCGEHYHYPCARTIDCAFLTDKSMYCPAHA). Positions 1856-1913 (KVQFHIGSVAVRQLGSIVPRFSDSFEAIVPINFLCSRLYWSSKEPWKIVEYTVRTTIQ) constitute an FYR N-terminal domain. Disordered stretches follow at residues 2252–2272 (CEPM…AQLS), 2464–2510 (AHQK…QQQQ), 2826–2848 (RNTN…PQQS), 2897–2973 (RQQQ…SPAA), 2988–3031 (APAP…QLSM), 3117–3178 (ASAN…VPAG), 3314–3338 (NGSG…DDDD), and 3457–3487 (KLDV…PMRD). Low complexity-rich tracts occupy residues 2253-2268 (EPMS…ATGT), 2483-2510 (QGQQ…QQQQ), and 2836-2848 (SVLS…PQQS). Residues 2897-2917 (RQQQANELKNKQAAGQQTGST) are compositionally biased toward polar residues. 4 stretches are compositionally biased toward low complexity: residues 2956-2973 (ATSA…SPAA), 2988-2997 (APAPQPQQQE), 3005-3031 (LHQQ…QLSM), and 3117-3132 (ASAN…QQNS). A compositionally biased stretch (polar residues) spans 3148–3164 (QQRQEPTPLSNDVVVQS). The segment covering 3328 to 3338 (DDAEEDEDDDD) has biased composition (acidic residues). Residues 3493 to 3577 (GPHLLYEIQS…EKCVKYTPKY (85 aa)) enclose the FYR C-terminal domain. The region spanning 3690-3806 (DYVGVFRSHI…QGEELTYDYK (117 aa)) is the SET domain. Residues His-3700, Arg-3702, Tyr-3744, and 3767–3768 (NH) each bind S-adenosyl-L-methionine. Cys-3770, Cys-3816, Cys-3818, and Cys-3823 together coordinate Zn(2+). The Post-SET domain maps to 3812–3828 (EKIPCSCGSKRCRKYLN).

It belongs to the class V-like SAM-binding methyltransferase superfamily. Histone-lysine methyltransferase family. TRX/MLL subfamily. Interacts with ash1 via its SET domain.

It is found in the nucleus. It carries out the reaction L-lysyl(9)-[histone H3] + 3 S-adenosyl-L-methionine = N(6),N(6),N(6)-trimethyl-L-lysyl(9)-[histone H3] + 3 S-adenosyl-L-homocysteine + 3 H(+). In terms of biological role, histone methyltransferase that methylates 'Lys-4' of histone H3 (H3K4me). H3K4me represents a specific tag for epigenetic transcriptional activation. Functions in segment determination through interaction with genes of bithorax (BX-C) and antennapedia (ANT-C) complexes. Acts as an activator of BX-C. Involved in the very early regulation of homeotic genes expressed only in the posterior region of the embryo. The sequence is that of Histone-lysine N-methyltransferase trithorax (trx) from Drosophila virilis (Fruit fly).